The sequence spans 241 residues: Chalcone--flavanone isomerase C (241 aa).

Substrate contacts are provided by T50, N115, and S192.

Belongs to the chalcone isomerase family.

The enzyme catalyses a chalcone = a flavanone.. Its pathway is secondary metabolite biosynthesis; flavonoid biosynthesis. Catalyzes the intramolecular cyclization of bicyclic chalcones into tricyclic (S)-flavanones. Responsible for the isomerization of 4,2',4',6'-tetrahydroxychalcone (also termed chalcone) into naringenin. This Petunia hybrida (Petunia) protein is Chalcone--flavanone isomerase C (CHI3).